Here is a 105-residue protein sequence, read N- to C-terminus: Putative thioredoxin-5 (105 aa).

Residues M1–L104 enclose the Thioredoxin domain. Catalysis depends on nucleophile residues C30 and C33. An intrachain disulfide couples C30 to C33.

The protein belongs to the thioredoxin family.

Participates in various redox reactions through the reversible oxidation of its active center dithiol to a disulfide and catalyzes dithiol-disulfide exchange reactions. The chain is Putative thioredoxin-5 (trxE) from Dictyostelium discoideum (Social amoeba).